The following is a 147-amino-acid chain: Phospholipase A2 inhibitor subunit A (147 aa).

Residues 62–143 (EICEEAGGHI…DENLLVVCEF (82 aa)) form the C-type lectin domain. 2 disulfides stabilise this stretch: C64–C141 and C119–C133. N-linked (GlcNAc...) asparagine glycosylation occurs at N103.

Belongs to the alpha-type phospholipase A2 inhibitor family. In terms of assembly, homo- or heterotrimer; homotrimer of PLI-A chains, two PLI-A and one PLI-B chains, one PLI-A and two PLI-B chains, and homotrimer of PLI-B chains (with a ratio of 1:3:3:1). Expressed by the liver.

The protein localises to the secreted. Its function is as follows. PLI binds directly phospholipase A2 in the presence or absence of calcium. Inhibitory activity of the PLI-A homotrimer is more specific than that of the PLI-B homotrimer. The sequence is that of Phospholipase A2 inhibitor subunit A from Protobothrops flavoviridis (Habu).